Reading from the N-terminus, the 593-residue chain is Methionine--tRNA ligase, mitochondrial (593 aa).

The N-terminal 29 residues, 1–29, are a transit peptide targeting the mitochondrion; sequence MLRTSVLRLLGRTGASRLSLLEDFGPRYY. Residues 52–62 carry the 'HIGH' region motif; it reads FYVNAAPHIGH. A 'KMSKS' region motif is present at residues 347–351; it reads KMSKS. Lys350 is a binding site for ATP.

This sequence belongs to the class-I aminoacyl-tRNA synthetase family.

The protein localises to the mitochondrion matrix. It catalyses the reaction tRNA(Met) + L-methionine + ATP = L-methionyl-tRNA(Met) + AMP + diphosphate. The polypeptide is Methionine--tRNA ligase, mitochondrial (MARS2) (Homo sapiens (Human)).